Reading from the N-terminus, the 261-residue chain is Indole-3-glycerol phosphate synthase (261 aa).

It belongs to the TrpC family.

It catalyses the reaction 1-(2-carboxyphenylamino)-1-deoxy-D-ribulose 5-phosphate + H(+) = (1S,2R)-1-C-(indol-3-yl)glycerol 3-phosphate + CO2 + H2O. Its pathway is amino-acid biosynthesis; L-tryptophan biosynthesis; L-tryptophan from chorismate: step 4/5. The chain is Indole-3-glycerol phosphate synthase from Burkholderia cenocepacia (strain HI2424).